The following is a 337-amino-acid chain: RNA 3'-terminal phosphate cyclase (337 aa).

ATP contacts are provided by residues Gln101 and His282–Asp285. The Tele-AMP-histidine intermediate role is filled by His306.

Belongs to the RNA 3'-terminal cyclase family. Type 1 subfamily.

The protein localises to the cytoplasm. It carries out the reaction a 3'-end 3'-phospho-ribonucleotide-RNA + ATP = a 3'-end 2',3'-cyclophospho-ribonucleotide-RNA + AMP + diphosphate. Functionally, catalyzes the conversion of 3'-phosphate to a 2',3'-cyclic phosphodiester at the end of RNA. The mechanism of action of the enzyme occurs in 3 steps: (A) adenylation of the enzyme by ATP; (B) transfer of adenylate to an RNA-N3'P to produce RNA-N3'PP5'A; (C) and attack of the adjacent 2'-hydroxyl on the 3'-phosphorus in the diester linkage to produce the cyclic end product. The biological role of this enzyme is unknown but it is likely to function in some aspects of cellular RNA processing. This Saccharolobus islandicus (strain M.16.4 / Kamchatka #3) (Sulfolobus islandicus) protein is RNA 3'-terminal phosphate cyclase.